The chain runs to 105 residues: Large ribosomal subunit protein uL24 (105 aa).

This sequence belongs to the universal ribosomal protein uL24 family. As to quaternary structure, part of the 50S ribosomal subunit.

One of two assembly initiator proteins, it binds directly to the 5'-end of the 23S rRNA, where it nucleates assembly of the 50S subunit. Its function is as follows. One of the proteins that surrounds the polypeptide exit tunnel on the outside of the subunit. This Buchnera aphidicola subsp. Cinara cedri (strain Cc) protein is Large ribosomal subunit protein uL24.